The following is a 546-amino-acid chain: CTP synthase (546 aa).

The segment at 1-266 (MTTNYIFVTG…DDLVCTRFGI (266 aa)) is amidoligase domain. CTP is bound at residue Ser-14. A UTP-binding site is contributed by Ser-14. ATP-binding positions include 15–20 (SLGKGI) and Asp-72. Asp-72 and Glu-140 together coordinate Mg(2+). CTP is bound by residues 147–149 (DIE), 187–192 (KTKPTQ), and Lys-223. UTP-binding positions include 187–192 (KTKPTQ) and Lys-223. 239 to 241 (KDV) lines the ATP pocket. The Glutamine amidotransferase type-1 domain maps to 291 to 542 (TIGMVGKYIE…VKAAGQYSRG (252 aa)). Residue Gly-352 coordinates L-glutamine. The Nucleophile; for glutamine hydrolysis role is filled by Cys-379. Residues 380-383 (LGMQ), Glu-403, and Arg-470 contribute to the L-glutamine site. Residues His-515 and Glu-517 contribute to the active site.

The protein belongs to the CTP synthase family. Homotetramer.

The enzyme catalyses UTP + L-glutamine + ATP + H2O = CTP + L-glutamate + ADP + phosphate + 2 H(+). The catalysed reaction is L-glutamine + H2O = L-glutamate + NH4(+). It catalyses the reaction UTP + NH4(+) + ATP = CTP + ADP + phosphate + 2 H(+). It functions in the pathway pyrimidine metabolism; CTP biosynthesis via de novo pathway; CTP from UDP: step 2/2. Its activity is regulated as follows. Allosterically activated by GTP, when glutamine is the substrate; GTP has no effect on the reaction when ammonia is the substrate. The allosteric effector GTP functions by stabilizing the protein conformation that binds the tetrahedral intermediate(s) formed during glutamine hydrolysis. Inhibited by the product CTP, via allosteric rather than competitive inhibition. Functionally, catalyzes the ATP-dependent amination of UTP to CTP with either L-glutamine or ammonia as the source of nitrogen. Regulates intracellular CTP levels through interactions with the four ribonucleotide triphosphates. In Vibrio parahaemolyticus serotype O3:K6 (strain RIMD 2210633), this protein is CTP synthase.